The sequence spans 454 residues: Capsid vertex component 1 (454 aa).

A disordered region spans residues 197–227; sequence TVRGESLDPPVSQKGPARTRHRPPPVRLSFN.

The protein belongs to the herpesviridae CVC1 protein family. As to quaternary structure, interacts (via C-terminus) with capsid vertex component 2/CVC2.

It is found in the virion. It localises to the host nucleus. Capsid vertex-specific component that plays a role during viral DNA encapsidation, assuring correct genome cleavage and presumably stabilizing capsids that contain full-length viral genomes. This chain is Capsid vertex component 1, found in Human herpesvirus 8 type P (isolate GK18) (HHV-8).